A 278-amino-acid polypeptide reads, in one-letter code: tRNA pseudouridine synthase A (278 aa).

Aspartate 52 (nucleophile) is an active-site residue. Tyrosine 111 contributes to the substrate binding site. Residues 253 to 264 show a composition bias toward low complexity; it reads AKAGPLEAAPLG. Residues 253–278 form a disordered region; sequence AKAGPLEAAPLGEAPLKEATLKEDWR. The segment covering 267–278 has biased composition (basic and acidic residues); that stretch reads PLKEATLKEDWR.

This sequence belongs to the tRNA pseudouridine synthase TruA family. In terms of assembly, homodimer.

The enzyme catalyses uridine(38/39/40) in tRNA = pseudouridine(38/39/40) in tRNA. Functionally, formation of pseudouridine at positions 38, 39 and 40 in the anticodon stem and loop of transfer RNAs. This Rhodospirillum rubrum (strain ATCC 11170 / ATH 1.1.1 / DSM 467 / LMG 4362 / NCIMB 8255 / S1) protein is tRNA pseudouridine synthase A.